The chain runs to 196 residues: Protein GrpE (196 aa).

The disordered stretch occupies residues 1–39; it reads MSSKEQKTPEGQAPEEIIMDQHEEIEAVEPEASAEQVDP.

The protein belongs to the GrpE family. As to quaternary structure, homodimer.

The protein localises to the cytoplasm. Participates actively in the response to hyperosmotic and heat shock by preventing the aggregation of stress-denatured proteins, in association with DnaK and GrpE. It is the nucleotide exchange factor for DnaK and may function as a thermosensor. Unfolded proteins bind initially to DnaJ; upon interaction with the DnaJ-bound protein, DnaK hydrolyzes its bound ATP, resulting in the formation of a stable complex. GrpE releases ADP from DnaK; ATP binding to DnaK triggers the release of the substrate protein, thus completing the reaction cycle. Several rounds of ATP-dependent interactions between DnaJ, DnaK and GrpE are required for fully efficient folding. This chain is Protein GrpE, found in Escherichia coli O139:H28 (strain E24377A / ETEC).